A 159-amino-acid polypeptide reads, in one-letter code: GDP-mannose mannosyl hydrolase (159 aa).

Substrate is bound by residues Phe-2–Leu-3, Phe-8, and Arg-36. The region spanning Arg-13 to Arg-153 is the Nudix hydrolase domain. Mg(2+) is bound by residues Gly-49, Glu-69, and Gln-122. The Nudix box motif lies at Gly-50–Gly-71.

As to quaternary structure, homodimer. Mg(2+) is required as a cofactor.

It catalyses the reaction GDP-alpha-D-mannose + H2O = D-mannose + GDP + H(+). Its function is as follows. Hydrolyzes both GDP-mannose and GDP-glucose. Could participate in the regulation of cell wall biosynthesis by influencing the concentration of GDP-mannose or GDP-glucose in the cell. Might also be involved in the biosynthesis of the slime polysaccharide colanic acid. The polypeptide is GDP-mannose mannosyl hydrolase (Escherichia coli (strain K12)).